Consider the following 345-residue polypeptide: Trans-3-hydroxy-L-proline dehydratase (345 aa).

Residue S90 is the Proton acceptor of the active site. Substrate contacts are provided by residues 91–92 (GS), D252, and 257–258 (GT).

The protein belongs to the proline racemase family.

The catalysed reaction is trans-3-hydroxy-L-proline = 1-pyrroline-2-carboxylate + H2O. Catalyzes the dehydration of trans-3-hydroxy-L-proline (t3LHyp) to Delta(1)-pyrroline-2-carboxylate (Pyr2C). May be involved in a degradation pathway that converts t3LHyp to L-proline, which would allow S.novella to grow on t3LHyp as a sole carbon source. This Ancylobacter novellus (strain ATCC 8093 / DSM 506 / JCM 20403 / CCM 1077 / IAM 12100 / NBRC 12443 / NCIMB 10456) (Starkeya novella) protein is Trans-3-hydroxy-L-proline dehydratase.